A 562-amino-acid polypeptide reads, in one-letter code: uncharacterized protein (562 aa).

Helical transmembrane passes span 10–27 (IYPEIAVFLSLAIGYWVG), 34–53 (FSLGAVTATLLAAVVIGQFD), 63–85 (IFFLMFLFAVGYGIGPQFVQGIA), 92–114 (ALFAVVACLFSLLFPILCAKIAG), and 155–177 (FSVIPVAYAVTYIFGTVGSAIVL). 2 RCK C-terminal domains span residues 204-288 (TENA…HPDS) and 290-377 (DETQ…QLGV). Transmembrane regions (helical) follow at residues 387–404 (VAFWAFAIVIGALLGSLV), 408–430 (GNLPLTLSTAGGVLIAGLIFSWV), 443–465 (PTVWFMNSVGLNVFIAAIGISAG), 475–497 (LGFSLFLWGVVATTLPLFFAALV), 504–526 (FHPAILLGCCAGARTTTASLGMI), and 539–561 (YTITYAVGNTLLTMWGLVLILIL).

It belongs to the AAE transporter (TC 2.A.81) family.

The protein localises to the cell membrane. This is an uncharacterized protein from Shewanella oneidensis (strain ATCC 700550 / JCM 31522 / CIP 106686 / LMG 19005 / NCIMB 14063 / MR-1).